The chain runs to 434 residues: Beta-phenylalanine transaminase (434 aa).

Arg-41 provides a ligand contact to (S)-3-amino-3-phenylpropanoate. Gly-132–Thr-133 contributes to the pyridoxal 5'-phosphate binding site. The residue at position 267 (Lys-267) is an N6-(pyridoxal phosphate)lysine. Residue Thr-300 coordinates pyridoxal 5'-phosphate.

This sequence belongs to the class-III pyridoxal-phosphate-dependent aminotransferase family. Homodimer. The cofactor is pyridoxal 5'-phosphate.

It carries out the reaction (S)-3-amino-3-phenylpropanoate + 2-oxoglutarate = 3-oxo-3-phenylpropanoate + L-glutamate. It catalyses the reaction (S)-3-amino-3-phenylpropanoate + pyruvate = 3-oxo-3-phenylpropanoate + L-alanine. With respect to regulation, is inhibited by 2-aminooxyacetate (AOA), a mimic of beta-alanine and a known inhibitor of aminotransferases. Functionally, aminotransferase that acts exclusively on beta-amino acids and exhibits a broad substrate range in vitro, accepting meta-, para- and, to a lesser extent, ortho-substituted beta-phenylalanine derivatives as amino donors, and 2-oxoglutarate or pyruvate as amino acceptors. Is highly enantioselective toward (S)-beta-phenylalanine (is not active with (R)-beta-phenylalanine) and derivatives with different substituents on the phenyl ring, allowing the kinetic resolution of various racemic beta-amino acids to yield (R)-beta-amino acids with &gt;95% enantiomeric excess (ee). Highly prefers aromatic beta-amino acids over aliphatic beta-amino acids; cannot use beta-alanine or beta-glutamate as substrate. Is likely involved in the beta-phenylalanine degradation pathway that allows V.paradoxus strain CBF3 to use beta-phenylalanine as a sole nitrogen source. The chain is Beta-phenylalanine transaminase from Variovorax paradoxus.